The chain runs to 205 residues: Recombination protein RecR (205 aa).

The C4-type zinc finger occupies 60–75 (CKVCHNISDTETCQIC). Positions 83–178 (STVCVVENIR…KLSVIARGIS (96 aa)) constitute a Toprim domain.

It belongs to the RecR family.

In terms of biological role, may play a role in DNA repair. It seems to be involved in an RecBC-independent recombinational process of DNA repair. It may act with RecF and RecO. The chain is Recombination protein RecR from Bacteroides thetaiotaomicron (strain ATCC 29148 / DSM 2079 / JCM 5827 / CCUG 10774 / NCTC 10582 / VPI-5482 / E50).